The following is a 181-amino-acid chain: UPF0398 protein lmo1889 (181 aa).

This sequence belongs to the UPF0398 family.

The sequence is that of UPF0398 protein lmo1889 from Listeria monocytogenes serovar 1/2a (strain ATCC BAA-679 / EGD-e).